The sequence spans 101 residues: Aspartyl/glutamyl-tRNA(Asn/Gln) amidotransferase subunit C (101 aa).

A disordered region spans residues 75–101 (QEALSGAPDAEEQRFRVPRILDEDVAS). Residues 85 to 101 (EEQRFRVPRILDEDVAS) show a composition bias toward basic and acidic residues.

The protein belongs to the GatC family. As to quaternary structure, heterotrimer of A, B and C subunits.

It carries out the reaction L-glutamyl-tRNA(Gln) + L-glutamine + ATP + H2O = L-glutaminyl-tRNA(Gln) + L-glutamate + ADP + phosphate + H(+). The enzyme catalyses L-aspartyl-tRNA(Asn) + L-glutamine + ATP + H2O = L-asparaginyl-tRNA(Asn) + L-glutamate + ADP + phosphate + 2 H(+). In terms of biological role, allows the formation of correctly charged Asn-tRNA(Asn) or Gln-tRNA(Gln) through the transamidation of misacylated Asp-tRNA(Asn) or Glu-tRNA(Gln) in organisms which lack either or both of asparaginyl-tRNA or glutaminyl-tRNA synthetases. The reaction takes place in the presence of glutamine and ATP through an activated phospho-Asp-tRNA(Asn) or phospho-Glu-tRNA(Gln). This is Aspartyl/glutamyl-tRNA(Asn/Gln) amidotransferase subunit C from Salinispora arenicola (strain CNS-205).